Reading from the N-terminus, the 82-residue chain is EMBRYO SURROUNDING FACTOR 1.2 (82 aa).

Positions 1 to 23 (MKSQTVLISIFIFSFFALHQCMQ) are cleaved as a signal peptide. 4 disulfide bridges follow: cysteine 40/cysteine 56, cysteine 45/cysteine 77, cysteine 54/cysteine 71, and cysteine 57/cysteine 64.

It belongs to the MEG family. As to expression, expressed exclusively in ovule embryo sacs and in early developing endosperms.

In terms of biological role, maternally-contributed central cell peptide regulating suspensor development and correct auxin distribution in early developing embryos. This chain is EMBRYO SURROUNDING FACTOR 1.2 (ESF1.2), found in Arabidopsis thaliana (Mouse-ear cress).